The primary structure comprises 842 residues: MVAFTVDQMRSLMDTVTNVRNMSVIAHVDHGKSTLTDSLVQKAGIISAAKAGEARFMDTRKDEQERGITIKSTAISLYSEMPDEDVKDIAQNTEGNAFLINLIDSPGHVDFSSEVTAALRVTDGALVVVDTVEGVCVQTETVLRQALGERIKPVVCINKVDRALLELQVSKEDLYQSFSRTVESVNVIISTYADEILGDVQVYPSKGTVAFGSGLHGWAFTIRQFAQRYAKKFGVDKVKMMERLWGDSYFNPKTKKWTNKETDADGKQLERAFNMFVLDPIFRLFAAIMNFKKDEIPVLLEKLEINLKGDEKDQEGKALLKTVMKKFLPAADALLEMIVMNLPSPVTAQAYRAEQLYEGPADDANCMAIKRCDPKADLMLYVSKMVPTSDKGRFYAFGRVFAGTVRSGQKVRIQGPNYVPGKKDDLFVKAIQRVVLMMGRFVEPIDDCPAGNIIGLVGIDQFLLKSGTLTTDETAHNMKVMKFSVSPVVQVAVEVKNANDLPKLVEGLKRLSKSDPCVLTYMAETGEHIVAGTGELHLEICLQDLENDHAGVPLKISPPVVAYRETVETESSQTALSKSPNKHNRIYLKAEPIEEEVSLAIESGKINPRDDLKARARVMADEFGWDVTDARKIWCFGPDGNGPNLVVDQTKAVQYLNEIKDSVVAAFQWATKEGPIFGEQMRSVRVNILDVTLHADAIHRGGGQIIPTMRRATYAGFLLAEPKIQEPVFLVEIQCPESAVGGIYSVLNKKRGQVVSEEQRPGTPLFTVKAYLPVNESFGFTGELRQATGGQAFPQMVFDHWATLGSDPLDPTSKAGEIVTAARKRHGMKEVVPGWQEYYDKL.

A tr-type G domain is found at 17-253; that stretch reads TNVRNMSVIA…LWGDSYFNPK (237 aa). GTP-binding positions include 26 to 33, 158 to 161, and 213 to 215; these read AHVDHGKS, NKVD, and SGL. Residue His-699 is modified to Diphthamide.

This sequence belongs to the TRAFAC class translation factor GTPase superfamily. Classic translation factor GTPase family. EF-G/EF-2 subfamily.

Its subcellular location is the cytoplasm. The catalysed reaction is GTP + H2O = GDP + phosphate + H(+). Catalyzes the GTP-dependent ribosomal translocation step during translation elongation. During this step, the ribosome changes from the pre-translocational (PRE) to the post-translocational (POST) state as the newly formed A-site-bound peptidyl-tRNA and P-site-bound deacylated tRNA move to the P and E sites, respectively. Catalyzes the coordinated movement of the two tRNA molecules, the mRNA and conformational changes in the ribosome. The chain is Elongation factor 2 (EFT1) from Naumovozyma castellii (Yeast).